The chain runs to 194 residues: HTH-type nicotine-responsive transcriptional repressor HdnoR (194 aa).

The 61-residue stretch at 6–66 folds into the HTH tetR-type domain; sequence VDRRQQLIDA…AAAAELLQQL (61 aa). Residues 29 to 48 constitute a DNA-binding region (H-T-H motif); it reads SLRTIASEAKASLAAVHVCF.

In terms of assembly, homodimer.

With respect to regulation, 6-hydroxy-D-nicotine and 6-hydroxy-L-nicotine prevent HdnoR from binding to the IR1 DNA. Both 6-hydroxy-nicotine enantiomers prevent DNA-protein complex formation at micromolar concentrations, with the D-enantiomer being twice as potent as the L-enantiomer. A thousand-fold higher L-nicotine concentration is required to elicit a similar effect. In terms of biological role, represses expression of the 6-hydroxy-D-nicotine oxidase (6-hdno). Acts by binding to a gene operator site consisting of two inverted repeats, IR1 (covering the 6-hdno promoter region) and IR2 (situated upstream from the 6-hdno promoter). Binding to one site may stimulate binding of the protein to the second site. This Paenarthrobacter nicotinovorans (Arthrobacter nicotinovorans) protein is HTH-type nicotine-responsive transcriptional repressor HdnoR.